A 78-amino-acid polypeptide reads, in one-letter code: Large ribosomal subunit protein bL28 (78 aa).

Over residues 1 to 20 (MSRVCQLTGTRANNGMSVSH) the composition is skewed to polar residues. Positions 1-23 (MSRVCQLTGTRANNGMSVSHSHI) are disordered.

It belongs to the bacterial ribosomal protein bL28 family.

The sequence is that of Large ribosomal subunit protein bL28 from Prochlorococcus marinus (strain NATL2A).